Here is a 299-residue protein sequence, read N- to C-terminus: Protein LacX, plasmid (299 aa).

This chain is Protein LacX, plasmid (lacX), found in Lactococcus lactis subsp. lactis (Streptococcus lactis).